The chain runs to 60 residues: Histidine-rich metal-binding polypeptide (60 aa).

Residues 1–60 (MAHHEEQHGGHHHHHHHTHHHHYHGGEHHHHHHSSHHEEGCCSTSDSHHQEEGCCHGHHE) form a disordered region. A compositionally biased stretch (basic residues) spans 10–35 (GHHHHHHHTHHHHYHGGEHHHHHHSS). A compositionally biased stretch (basic and acidic residues) spans 36 to 60 (HHEEGCCSTSDSHHQEEGCCHGHHE). Repeat copies occupy residues 38 to 42 (EEGCC) and 51 to 55 (EEGCC). Residues 38-55 (EEGCCSTSDSHHQEEGCC) form a 2 X 5 AA repeats of E-E-G-C-C region.

Strongly binds nickel and zinc. Binds other metals less strongly: cobalt &gt; copper &gt; cadmium &gt; manganese. May act to increase, or at least to preserve, urease activity. Exact function is still unknown. This Helicobacter pylori (strain J99 / ATCC 700824) (Campylobacter pylori J99) protein is Histidine-rich metal-binding polypeptide (hpn).